Reading from the N-terminus, the 37-residue chain is Large ribosomal subunit protein bL36 (37 aa).

It belongs to the bacterial ribosomal protein bL36 family.

The chain is Large ribosomal subunit protein bL36 from Nitrosococcus oceani (strain ATCC 19707 / BCRC 17464 / JCM 30415 / NCIMB 11848 / C-107).